Here is a 20-residue protein sequence, read N- to C-terminus: Alpha-conotoxin-like ts14a (20 aa).

Disulfide bonds link Cys-3–Cys-16 and Cys-14–Cys-20.

In terms of tissue distribution, expressed by the venom duct.

It is found in the secreted. Functionally, alpha-conotoxins act on postsynaptic membranes, they bind to the nicotinic acetylcholine receptors (nAChR) and thus inhibit them. The protein is Alpha-conotoxin-like ts14a of Conus tessulatus (Tessellate cone).